Consider the following 393-residue polypeptide: Phospho-N-acetylmuramoyl-pentapeptide-transferase (393 aa).

The next 10 membrane-spanning stretches (helical) occupy residues 29 to 49 (RAVM…PIVI), 75 to 95 (TPTM…LLWF), 101 to 121 (FVWI…VDDW), 138 to 158 (YFWQ…SVSE), 193 to 213 (SISY…VIVG), 226 to 246 (GLAI…AYAT), 263 to 283 (AGEL…FLWF), 290 to 310 (VFMG…IAVI), 315 to 335 (VVLA…MAQV), and 370 to 390 (QVVV…LSSL).

This sequence belongs to the glycosyltransferase 4 family. MraY subfamily. Mg(2+) serves as cofactor.

It is found in the cell inner membrane. The catalysed reaction is UDP-N-acetyl-alpha-D-muramoyl-L-alanyl-gamma-D-glutamyl-meso-2,6-diaminopimeloyl-D-alanyl-D-alanine + di-trans,octa-cis-undecaprenyl phosphate = di-trans,octa-cis-undecaprenyl diphospho-N-acetyl-alpha-D-muramoyl-L-alanyl-D-glutamyl-meso-2,6-diaminopimeloyl-D-alanyl-D-alanine + UMP. Its pathway is cell wall biogenesis; peptidoglycan biosynthesis. Catalyzes the initial step of the lipid cycle reactions in the biosynthesis of the cell wall peptidoglycan: transfers peptidoglycan precursor phospho-MurNAc-pentapeptide from UDP-MurNAc-pentapeptide onto the lipid carrier undecaprenyl phosphate, yielding undecaprenyl-pyrophosphoryl-MurNAc-pentapeptide, known as lipid I. In Methylibium petroleiphilum (strain ATCC BAA-1232 / LMG 22953 / PM1), this protein is Phospho-N-acetylmuramoyl-pentapeptide-transferase.